The chain runs to 433 residues: Schlafen-like protein 2 (433 aa).

The B30.2/SPRY domain maps to 1-168; that stretch reads MADTSPRESK…LSVNFGSQPF (168 aa). The SLFN-like fold stretch occupies residues 199-400; the sequence is EHVVVKLPFA…RRMASNKCVY (202 aa). Catalysis depends on residues Glu211 and Glu216.

The protein belongs to the Schlafen family. As to quaternary structure, component of the trimeric PUCH (precursor of 21U RNA 5'-end cleavage holoenzyme) complex; consisting of tofu-1, tofu-2 and either slfl-3 or slfl-4. Within the complex, interacts (via N-terminus) with tofu-1 (via N-terminus); the interaction stabilizes tofu-2 and may form a functional nuclease. Within the complex, interacts (via N-terminus) with slfl-3 (via N-terminus); the presence of tofu-1 is required for this interaction. Mg(2+) is required as a cofactor. Expressed in the germline.

It localises to the cytoplasm. It is found in the mitochondrion. Its activity is regulated as follows. Inhibited by ethylenediaminetetraacetic acid (EDTA). In terms of biological role, component of the trimeric PUCH (precursor of 21U RNA 5'-end cleavage holoenzyme) complex, that acts as an endoribonuclease processing the 5'-end of precursor Piwi-interacting RNAs (piRNAs). The PUCH complex consists of tofu-1, tofu-2 and either slfl-3 or slfl-4, with tofu-2 exhibiting endoribonuclease activity. PUCH-mediated processing strictly requires a 7-methyl-G cap (m7 G-cap) and an uracil at position three (U3). PUCH also exhibits a strict bias for piRNA precursors with an A or G at position 1. Mature piRNA production is enhanced by the interaction of PUCH with the PETISCO complex, which is stabilizing piRNA precursors and allows their processing by PUCH. The protein is Schlafen-like protein 2 of Caenorhabditis elegans.